The primary structure comprises 163 residues: 2,3-dimethylmalate dehydratase small subunit (163 aa).

Belongs to the LeuD family. LeuD type 2 subfamily. Heterodimer of a large and a small subunit.

It catalyses the reaction (2R,3S)-2,3-dimethylmalate = dimethylmaleate + H2O. Its pathway is cofactor degradation; nicotinate degradation; propanoate and pyruvate from 6-hydroxynicotinate: step 7/8. The protein is 2,3-dimethylmalate dehydratase small subunit of Eubacterium barkeri (Clostridium barkeri).